Consider the following 571-residue polypeptide: MASMQEVDALVVGAGFGGLWMTNRLKEAGLNVLCVEKAPQAGGVWYWNCYPGARVDSRYPVYQYSDESLCKDWNWSELFPGYEEIRKYLSYAVDKWQLNSHIRYNTTVTGARFDESDHKWTVEGINGSHGTIRIRCRWYILALGFASKPYIPDFEGLNRFQGPCFHSSAWPQEGIDLKGRRVAVVGTGASAVQIIQTISKEVGHLTVYQRTPCTAMPMRQQSLTPEYQDNFKASGEMAATMRRTKYERFGGQDVQFVSRRWHEDTPEQRRAVFEQAWQKGGFHLLLSTYFEVFDDVEVNHAAWRFWAEKSRERIHNTKYKDILAPLEAVHAFGGKRTPFEQDYFEAFNRRNVDLIDMKASPILSFAEKGIITQNEGLQEFDVIILATGFDTNTGALTSIHIQDTDGILLKDRWSYDGVMTTFGMSTSKFPNMFFFYGPQAPTAFSNGPSCIELQGEFVEELILDMIGKGVTRVDTTSEAEKRWKESTLSLWNQFVFSSTKGFYTGENIPGKKAEPLNWFGGFPRYRKALTECRDGGYKEYSLRSLPKVPDPEHRGLIDKVAVVTSAQPVGA.

FAD is bound by residues 44–47 (VWYW), 56–57 (DS), and Tyr-62. Residue 54–56 (RVD) coordinates NADP(+). NADP(+) is bound by residues 187 to 193 (TGASAVQ) and 210 to 211 (RT).

Belongs to the FAD-binding monooxygenase family. FAD serves as cofactor.

The enzyme catalyses 9,10-dihydroxy-7-methoxy-3-(2-oxopropyl)-1H-benzo[g]isochromen-1-one + NADPH + O2 + H(+) = methyl 2-[(3S)-9,10-dihydroxy-7-methoxy-1-oxo-1H,3H,4H-naphtho[2,3-c]pyran-3-yl]acetate + NADP(+) + H2O. The catalysed reaction is (3S)-9,10-dihydroxy-7-methoxy-3-(2-oxopropyl)-1H,3H,4H-naphtho[2,3-c]pyran-1-one + NADPH + O2 + H(+) = semiviriditoxin + NADP(+) + H2O. It participates in secondary metabolite biosynthesis. Its function is as follows. FAD-binding monooxygenase; part of the gene cluster that mediates the biosynthesis of viriditoxin, one of the 'classical' secondary metabolites produced by fungi and that has antibacterial activity. The first step is performed by the polyketide synthase VdtA which condenses one acetyl-CoA and 6 malonyl-CoA units to form the heptaketide monomer backbone of viriditoxin. The product of VdtA is then O-methylated on C7 by the O-methyltransferase VdtC. The O-methyl group is important for the stereoselective coupling of the monomers at the final step of viriditoxin biosynthesis. The short-chain dehydrogenase/reductase VdtF then acts as a stereospecific reductase converting the pyrone to dihydropyrone via the reduction of the C3-C4 double bond. The FAD-binding monooxygenase VdtE then converts the ketone group into a methyl-ester group to yield semi-viriditoxin. Finally, the laccase VdtB is involved in dimerization of 2 semi-viriditoxin molecules to yield the final viriditoxin. VdtB is responsible for the regioselective 6,6'-coupling of semi-viriditoxin, which yields (M)-viriditoxin and (P)-viriditoxin at a ratio of 1:2. The non-catalytic carboxylesterase-like protein VdtD affects the stereochemistical outcome of the coupling. The highly reducing polyketide synthase VdtX is not involved in viriditoxin synthesis, but might possibly play a role in the production of additional metabolites not identified yet. This is FAD-binding monooxygenase VdtE from Byssochlamys spectabilis (Paecilomyces variotii).